Here is a 227-residue protein sequence, read N- to C-terminus: DNA repair protein RecO (227 aa).

The protein belongs to the RecO family.

In terms of biological role, involved in DNA repair and RecF pathway recombination. The polypeptide is DNA repair protein RecO (Pseudomonas putida (strain ATCC 700007 / DSM 6899 / JCM 31910 / BCRC 17059 / LMG 24140 / F1)).